The primary structure comprises 443 residues: Trihelix transcription factor ASIL2 (443 aa).

Residues 1 to 82 are disordered; the sequence is MEDDEDIRSQ…RPTGGGGRED (82 aa). The segment covering 38–48 has biased composition (polar residues); sequence YSLTPPGNSSQ. The segment covering 64–78 has biased composition (gly residues); sequence SGGGNNSSGRPTGGG. Positions 84 to 144 constitute a Myb-like domain; that stretch reads WSEAATAVLI…QCKNRIDTVK (61 aa). 2 disordered regions span residues 238 to 350 and 413 to 443; these read FGGS…GNKW and RRMGNTSNDHHHSRKNNINAIVNNNNDLGNN. Over residues 239 to 249 the composition is skewed to gly residues; sequence GGSGGGGGGGS. Over residues 271-286 the composition is skewed to low complexity; sequence TLPQQGRTLPQQQQQG. Residues 290–303 carry the Bipartite nuclear localization signal motif; the sequence is KRCSESKRWRFRKR. Over residues 333–350 the composition is skewed to basic and acidic residues; sequence MKTEEKKKQDGDGVGNKW. Positions 360-414 form a coiled coil; the sequence is FGEAYEQTENAKLQQVVEMEKERMKFLKELELQRMQFFVKTQLEISQLKQQHGRR. Over residues 428–443 the composition is skewed to low complexity; that stretch reads NNINAIVNNNNDLGNN.

It is found in the nucleus. Its function is as follows. Transcription regulator that may repress the maturation program during early embryogenesis. This chain is Trihelix transcription factor ASIL2, found in Arabidopsis thaliana (Mouse-ear cress).